The following is a 288-amino-acid chain: Ribonuclease HIII (288 aa).

The RNase H type-2 domain maps to tyrosine 76 to asparagine 288. 3 residues coordinate a divalent metal cation: aspartate 82, glutamate 83, and aspartate 185.

The protein belongs to the RNase HII family. RnhC subfamily. Mn(2+) is required as a cofactor. The cofactor is Mg(2+).

Its subcellular location is the cytoplasm. It carries out the reaction Endonucleolytic cleavage to 5'-phosphomonoester.. Its function is as follows. Endonuclease that specifically degrades the RNA of RNA-DNA hybrids. This Phytoplasma mali (strain AT) protein is Ribonuclease HIII.